Reading from the N-terminus, the 1493-residue chain is Myosin-13 (1493 aa).

Positions 18–67 (KVGSIVWVQDPEEAWIDGEVVEVNGEDIKVQCTSGKTVVAKGSNTYPKDM) constitute a Myosin N-terminal SH3-like domain. Positions 72 to 741 (SGVDDMTTLA…QMAELDDRRT (670 aa)) constitute a Myosin motor domain. Residues 166 to 173 (GESGAGKT) and 219 to 227 (NNNSSRFGK) each bind ATP. 4 actin-binding regions span residues 504-538 (LIEK…YETL), 540-563 (DNKY…AGDV), 598-622 (FPPL…KQQL), and 622-644 (LASL…KPNN). IQ domains are found at residues 744–773 (LGRA…AAIN), 767–796 (LRNA…EAAA), 792–821 (REAA…VTVQ), 813–842 (YIEA…ATTV), 836–865 (KTKA…AAIT), and 859–888 (LKKA…DARD). The stretch at 889-1057 (TVVLQAAKSM…NFLKESVLTT (169 aa)) forms a coiled coil. The segment at 1085–1114 (QLSGAEFTTPPRIQESGSDTKSRGSHIDPQ) is disordered. Over residues 1102-1114 (SDTKSRGSHIDPQ) the composition is skewed to basic and acidic residues. A Dilute domain is found at 1161-1444 (DRLVQMIGSA…IASMTGVMTD (284 aa)).

It belongs to the TRAFAC class myosin-kinesin ATPase superfamily. Myosin family. Plant myosin class XI subfamily. As to quaternary structure, homodimer.

Its function is as follows. Myosin heavy chain that is required for the cell cycle-regulated transport of various organelles and proteins for their segregation. Functions by binding with its tail domain to receptor proteins on organelles and exerting force with its N-terminal motor domain against actin filaments, thereby transporting its cargo along polarized actin cables. The polypeptide is Myosin-13 (XI-G) (Arabidopsis thaliana (Mouse-ear cress)).